The sequence spans 88 residues: DASH complex subunit HSK3 (88 aa).

Over residues Met1–Ser15 the composition is skewed to low complexity. Residues Met1–Lys24 are disordered.

It belongs to the DASH complex HSK3 family. Component of the DASH complex consisting of ASK1, DAD1, DAD2, DAD3, DAD4, DAM1, DUO1, HSK3, SPC19 and SPC34, with a stoichiometry of one copy of each subunit per complex. Multiple DASH complexes oligomerize to form a ring that encircles spindle microtubules and organizes the rod-like NDC80 complexes of the outer kinetochore. DASH complex oligomerization strengthens microtubule attachments. On cytoplasmic microtubules, DASH complexes appear to form patches instead of rings.

The protein localises to the nucleus. It is found in the cytoplasm. The protein resides in the cytoskeleton. Its subcellular location is the spindle. It localises to the chromosome. The protein localises to the centromere. It is found in the kinetochore. In terms of biological role, component of the DASH complex that connects microtubules with kinetochores and couples microtubule depolymerisation to chromosome movement; it is involved in retrieving kinetochores to the spindle poles before their re-orientation on the spindle in early mitosis and allows microtubule depolymerization to pull chromosomes apart and resist detachment during anaphase. Kinetochores, consisting of a centromere-associated inner segment and a microtubule-contacting outer segment, play a crucial role in chromosome segregation by mediating the physical connection between centromeric DNA and microtubules. Kinetochores also serve as an input point for the spindle assembly checkpoint, which delays anaphase until all chromosomes have bioriented on the mitotic spindle. The polypeptide is DASH complex subunit HSK3 (Chaetomium thermophilum (strain DSM 1495 / CBS 144.50 / IMI 039719) (Thermochaetoides thermophila)).